The sequence spans 84 residues: Small ribosomal subunit protein uS15 (84 aa).

The protein belongs to the universal ribosomal protein uS15 family. As to quaternary structure, part of the 30S ribosomal subunit. Forms a bridge to the 50S subunit in the 70S ribosome, contacting the 23S rRNA.

In terms of biological role, one of the primary rRNA binding proteins, it binds directly to 16S rRNA where it helps nucleate assembly of the platform of the 30S subunit by binding and bridging several RNA helices of the 16S rRNA. Forms an intersubunit bridge (bridge B4) with the 23S rRNA of the 50S subunit in the ribosome. The sequence is that of Small ribosomal subunit protein uS15 from Thermosipho melanesiensis (strain DSM 12029 / CIP 104789 / BI429).